Consider the following 405-residue polypeptide: Cytochrome P450 107B1 (405 aa).

A heme-binding site is contributed by Cys352.

The protein belongs to the cytochrome P450 family. Requires heme as cofactor.

The protein resides in the cytoplasm. In terms of biological role, not known, probably involved in the catabolism of octane and guaiacol. It displays a weak activity in the O-dealkylation of 7-ethoxycoumarin. The protein is Cytochrome P450 107B1 (cyp107B1) of Saccharopolyspora erythraea (strain ATCC 11635 / DSM 40517 / JCM 4748 / NBRC 13426 / NCIMB 8594 / NRRL 2338).